Reading from the N-terminus, the 273-residue chain is Proteasome subunit beta (273 aa).

A compositionally biased stretch (polar residues) spans 1–19 (MQESTANKVAANATSSFTE). The disordered stretch occupies residues 1 to 23 (MQESTANKVAANATSSFTEHLQR). The propeptide at 1–50 (MQESTANKVAANATSSFTEHLQRDRPELLPFNRSGQGSATAAAPLQVPHA) is removed in mature form; by autocatalysis. The Nucleophile role is filled by threonine 51.

The protein belongs to the peptidase T1B family. As to quaternary structure, the 20S proteasome core is composed of 14 alpha and 14 beta subunits that assemble into four stacked heptameric rings, resulting in a barrel-shaped structure. The two inner rings, each composed of seven catalytic beta subunits, are sandwiched by two outer rings, each composed of seven alpha subunits. The catalytic chamber with the active sites is on the inside of the barrel. Has a gated structure, the ends of the cylinder being occluded by the N-termini of the alpha-subunits. Is capped by the proteasome-associated ATPase, ARC.

It localises to the cytoplasm. The catalysed reaction is Cleavage of peptide bonds with very broad specificity.. It participates in protein degradation; proteasomal Pup-dependent pathway. Its activity is regulated as follows. The formation of the proteasomal ATPase ARC-20S proteasome complex, likely via the docking of the C-termini of ARC into the intersubunit pockets in the alpha-rings, may trigger opening of the gate for substrate entry. Interconversion between the open-gate and close-gate conformations leads to a dynamic regulation of the 20S proteasome proteolysis activity. In terms of biological role, component of the proteasome core, a large protease complex with broad specificity involved in protein degradation. This Pseudarthrobacter chlorophenolicus (strain ATCC 700700 / DSM 12829 / CIP 107037 / JCM 12360 / KCTC 9906 / NCIMB 13794 / A6) (Arthrobacter chlorophenolicus) protein is Proteasome subunit beta.